The following is a 498-amino-acid chain: ATP synthase subunit beta, chloroplastic (498 aa).

172–179 is an ATP binding site; it reads GGAGVGKT.

It belongs to the ATPase alpha/beta chains family. F-type ATPases have 2 components, CF(1) - the catalytic core - and CF(0) - the membrane proton channel. CF(1) has five subunits: alpha(3), beta(3), gamma(1), delta(1), epsilon(1). CF(0) has four main subunits: a(1), b(1), b'(1) and c(9-12).

Its subcellular location is the plastid. It is found in the chloroplast thylakoid membrane. It carries out the reaction ATP + H2O + 4 H(+)(in) = ADP + phosphate + 5 H(+)(out). In terms of biological role, produces ATP from ADP in the presence of a proton gradient across the membrane. The catalytic sites are hosted primarily by the beta subunits. The chain is ATP synthase subunit beta, chloroplastic from Lemna minor (Common duckweed).